Reading from the N-terminus, the 475-residue chain is Cysteine--tRNA ligase (475 aa).

Cysteine 28 is a Zn(2+) binding site. The 'HIGH' region motif lies at 30-40; it reads PTVYDYAHIGN. Positions 213, 238, and 242 each coordinate Zn(2+). The 'KMSKS' region signature appears at 270 to 274; sequence KMSKS. Lysine 273 provides a ligand contact to ATP.

The protein belongs to the class-I aminoacyl-tRNA synthetase family. In terms of assembly, monomer. The cofactor is Zn(2+).

The protein resides in the cytoplasm. The enzyme catalyses tRNA(Cys) + L-cysteine + ATP = L-cysteinyl-tRNA(Cys) + AMP + diphosphate. This chain is Cysteine--tRNA ligase (cysS), found in Chlamydia muridarum (strain MoPn / Nigg).